Here is a 471-residue protein sequence, read N- to C-terminus: Ribulose bisphosphate carboxylase large chain (471 aa).

2 residues coordinate substrate: N115 and T165. The Proton acceptor role is filled by K167. K169 is a binding site for substrate. 3 residues coordinate Mg(2+): K193, D195, and E196. At K193 the chain carries N6-carboxylysine. The Proton acceptor role is filled by H286. Residues R287, H319, and S371 each coordinate substrate.

It belongs to the RuBisCO large chain family. Type I subfamily. As to quaternary structure, heterohexadecamer of 8 large chains and 8 small chains. Requires Mg(2+) as cofactor.

Its subcellular location is the carboxysome. It catalyses the reaction 2 (2R)-3-phosphoglycerate + 2 H(+) = D-ribulose 1,5-bisphosphate + CO2 + H2O. The enzyme catalyses D-ribulose 1,5-bisphosphate + O2 = 2-phosphoglycolate + (2R)-3-phosphoglycerate + 2 H(+). Functionally, ruBisCO catalyzes two reactions: the carboxylation of D-ribulose 1,5-bisphosphate, the primary event in carbon dioxide fixation, as well as the oxidative fragmentation of the pentose substrate in the photorespiration process. Both reactions occur simultaneously and in competition at the same active site. This is Ribulose bisphosphate carboxylase large chain from Synechococcus sp. (strain WH7803).